A 290-amino-acid chain; its full sequence is ATP synthase gamma chain (290 aa).

It belongs to the ATPase gamma chain family. In terms of assembly, F-type ATPases have 2 components, CF(1) - the catalytic core - and CF(0) - the membrane proton channel. CF(1) has five subunits: alpha(3), beta(3), gamma(1), delta(1), epsilon(1). CF(0) has three main subunits: a, b and c.

It is found in the cell inner membrane. Produces ATP from ADP in the presence of a proton gradient across the membrane. The gamma chain is believed to be important in regulating ATPase activity and the flow of protons through the CF(0) complex. The sequence is that of ATP synthase gamma chain from Anaeromyxobacter dehalogenans (strain 2CP-1 / ATCC BAA-258).